Reading from the N-terminus, the 382-residue chain is Alanine racemase (382 aa).

Catalysis depends on lysine 39, which acts as the Proton acceptor; specific for D-alanine. The residue at position 39 (lysine 39) is an N6-(pyridoxal phosphate)lysine. Position 138 (arginine 138) interacts with substrate. Catalysis depends on tyrosine 265, which acts as the Proton acceptor; specific for L-alanine. Methionine 312 lines the substrate pocket.

This sequence belongs to the alanine racemase family. Pyridoxal 5'-phosphate is required as a cofactor.

It carries out the reaction L-alanine = D-alanine. It functions in the pathway amino-acid biosynthesis; D-alanine biosynthesis; D-alanine from L-alanine: step 1/1. In terms of biological role, catalyzes the interconversion of L-alanine and D-alanine. May also act on other amino acids. The protein is Alanine racemase (alr) of Staphylococcus saprophyticus subsp. saprophyticus (strain ATCC 15305 / DSM 20229 / NCIMB 8711 / NCTC 7292 / S-41).